The primary structure comprises 282 residues: tRNA pseudouridine synthase B (282 aa).

The Nucleophile role is filled by aspartate 39.

Belongs to the pseudouridine synthase TruB family. Type 1 subfamily.

It catalyses the reaction uridine(55) in tRNA = pseudouridine(55) in tRNA. In terms of biological role, responsible for synthesis of pseudouridine from uracil-55 in the psi GC loop of transfer RNAs. This chain is tRNA pseudouridine synthase B, found in Borreliella afzelii (strain PKo) (Borrelia afzelii).